A 704-amino-acid chain; its full sequence is MARVTPIVRYRNIGISAHIDAGKTTTTERILFYTGVNHKIGEVHTGSATMDWMEQEQERGITITSAATTCFWSGMANQFDSHRINIIDTPGHVDFTIEVERSMRILDGVVMVYCAVGGVQPQSETVWRQANKYKVPRIAFINKMDRVGADYLRVVEQLKTRLFANPVPIQLAVGSEDKFTGIIDLIKMKAIHWNELDQGVTFSYSEIPDNLTDLSGIWRKHLIESAVEVSEELMDKYLSNSDQLTEQEIKQALRQRVLSNEIVLVTCGSAFKNKGVQAMLDAVVEYLPSPSDVTSITGVLKDGSTRVNRHANDHEPFSALAFKIATDPFVGNLTFFRVYSGVVSSGDSVLNPIKEKRERFGRIVQMHANKREEIKSVHAGDIAAAIGLKDVDTGDTLCAPSSPIILERMEFPEPVISVMVEAKTKSDQEKMGFALNRLAQEDPSFRVWIDKDSGQTIIAGMGELHLEILVERMRREFNVEANVGKPQVAYRETIRTSVKQEGKFIRQSGGRGQFGHVWLRIEPMPAREEGYKFLNEIVGGAVPKEYIPAVDKGVREQISNGILAGYPIVDVCVTIFDGSYHEVDSSEIAFKIAGSIAFKEGFMKAHPVLLEPIMNVEIETPEDYMGDVIADLNRRRGIISGLENSTISGKIICAQVPLSEMFGYATGLRSQTQGRASYSMEFLKYNEVPNSIAQIIINSRQIKQ.

The region spanning 8–291 is the tr-type G domain; it reads VRYRNIGISA…AVVEYLPSPS (284 aa). Residues 17–24, 88–92, and 142–145 each bind GTP; these read AHIDAGKT, DTPGH, and NKMD.

The protein belongs to the TRAFAC class translation factor GTPase superfamily. Classic translation factor GTPase family. EF-G/EF-2 subfamily.

The protein resides in the cytoplasm. Functionally, catalyzes the GTP-dependent ribosomal translocation step during translation elongation. During this step, the ribosome changes from the pre-translocational (PRE) to the post-translocational (POST) state as the newly formed A-site-bound peptidyl-tRNA and P-site-bound deacylated tRNA move to the P and E sites, respectively. Catalyzes the coordinated movement of the two tRNA molecules, the mRNA and conformational changes in the ribosome. In Blochmanniella pennsylvanica (strain BPEN), this protein is Elongation factor G.